The sequence spans 911 residues: Nitrate reductase [NADH], clone PBNBR1412 (911 aa).

The tract at residues 53–72 (NDAVDDSYDSSDDEDESHNR) is disordered. Over residues 56–68 (VDDSYDSSDDEDE) the composition is skewed to acidic residues. Cys191 lines the Mo-molybdopterin pocket. One can recognise a Cytochrome b5 heme-binding domain in the interval 539–614 (AKMYSMSEVR…LEDYRIGELI (76 aa)). His574 and His597 together coordinate heme. Positions 654–766 (REKVPVTLIE…KGPLGHIEYL (113 aa)) constitute an FAD-binding FR-type domain. Residues 706-709 (RAYT), 723-727 (VVKVY), Phe728, Phe735, 740-742 (LMS), and Thr793 contribute to the FAD site.

It belongs to the nitrate reductase family. As to quaternary structure, homodimer. FAD serves as cofactor. Requires heme as cofactor. The cofactor is Mo-molybdopterin.

The catalysed reaction is nitrite + NAD(+) + H2O = nitrate + NADH + H(+). Nitrate reductase is a key enzyme involved in the first step of nitrate assimilation in plants, fungi and bacteria. The polypeptide is Nitrate reductase [NADH], clone PBNBR1412 (NIA2) (Brassica napus (Rape)).